The chain runs to 452 residues: MEISGKNILVVGLARTGVAVARFLARNGARVTVTDLRDESALAGPLRELAGLSVRYVLDRHDEADFAAADVVVVSPGVPQESPYLQAARRAGREVITEIELASRFVTVPMVAITGTNGKTTTTTLTGEIFSACGFRTFVGGNIGNPLIELVEGGETVERVVVEISSFQLEWISSFRPRVAVLLNITEDHLDRYATFQEYIDAKVRIFENQESTDYAVLNVDDPIVAGIAGRVAATVFPMSQQRELAEGVFHRDGVITFRHQGREERFPTARFRITGVHNIENIMASLAATLLLGCDAKQALAAVEGFGGLPHRMELVRELAGVRYYEDSKATNVGSVEKALASFNDITLIAGGKDKGGSYAPLAPLVTERVRHMVLIGEAKERMARELGSLTDTRMATTLEEAVELAASLTEPGGVVLFSPACSSFDMFRDYEERAQRFRAAVNALGTGERP.

Residue 115 to 121 (GTNGKTT) participates in ATP binding.

It belongs to the MurCDEF family.

It localises to the cytoplasm. It carries out the reaction UDP-N-acetyl-alpha-D-muramoyl-L-alanine + D-glutamate + ATP = UDP-N-acetyl-alpha-D-muramoyl-L-alanyl-D-glutamate + ADP + phosphate + H(+). Its pathway is cell wall biogenesis; peptidoglycan biosynthesis. Functionally, cell wall formation. Catalyzes the addition of glutamate to the nucleotide precursor UDP-N-acetylmuramoyl-L-alanine (UMA). This chain is UDP-N-acetylmuramoylalanine--D-glutamate ligase, found in Geobacter metallireducens (strain ATCC 53774 / DSM 7210 / GS-15).